The primary structure comprises 426 residues: Enolase (426 aa).

Q163 is a binding site for (2R)-2-phosphoglycerate. Catalysis depends on E205, which acts as the Proton donor. The Mg(2+) site is built by D242, E283, and D310. 4 residues coordinate (2R)-2-phosphoglycerate: K335, R364, S365, and K386. K335 functions as the Proton acceptor in the catalytic mechanism.

Belongs to the enolase family. Mg(2+) serves as cofactor.

Its subcellular location is the cytoplasm. It is found in the secreted. The protein resides in the cell surface. It catalyses the reaction (2R)-2-phosphoglycerate = phosphoenolpyruvate + H2O. Its pathway is carbohydrate degradation; glycolysis; pyruvate from D-glyceraldehyde 3-phosphate: step 4/5. Functionally, catalyzes the reversible conversion of 2-phosphoglycerate (2-PG) into phosphoenolpyruvate (PEP). It is essential for the degradation of carbohydrates via glycolysis. This is Enolase from Arthrobacter sp. (strain FB24).